The chain runs to 466 residues: ATP synthase subunit beta (466 aa).

148–155 lines the ATP pocket; sequence GGAGVGKT.

This sequence belongs to the ATPase alpha/beta chains family. In terms of assembly, F-type ATPases have 2 components, CF(1) - the catalytic core - and CF(0) - the membrane proton channel. CF(1) has five subunits: alpha(3), beta(3), gamma(1), delta(1), epsilon(1). CF(0) has three main subunits: a(1), b(2) and c(9-12). The alpha and beta chains form an alternating ring which encloses part of the gamma chain. CF(1) is attached to CF(0) by a central stalk formed by the gamma and epsilon chains, while a peripheral stalk is formed by the delta and b chains.

It localises to the cell inner membrane. It catalyses the reaction ATP + H2O + 4 H(+)(in) = ADP + phosphate + 5 H(+)(out). Its function is as follows. Produces ATP from ADP in the presence of a proton gradient across the membrane. The catalytic sites are hosted primarily by the beta subunits. The sequence is that of ATP synthase subunit beta from Xylella fastidiosa (strain M12).